Consider the following 155-residue polypeptide: Regulatory protein RecX (155 aa).

It belongs to the RecX family.

The protein resides in the cytoplasm. In terms of biological role, modulates RecA activity. This Pseudomonas savastanoi pv. phaseolicola (strain 1448A / Race 6) (Pseudomonas syringae pv. phaseolicola (strain 1448A / Race 6)) protein is Regulatory protein RecX.